A 182-amino-acid chain; its full sequence is UPF0149 protein HI_0817 (182 aa).

It belongs to the UPF0149 family.

The sequence is that of UPF0149 protein HI_0817 from Haemophilus influenzae (strain ATCC 51907 / DSM 11121 / KW20 / Rd).